Reading from the N-terminus, the 161-residue chain is Putative pre-16S rRNA nuclease (161 aa).

This sequence belongs to the YqgF nuclease family.

It is found in the cytoplasm. Could be a nuclease involved in processing of the 5'-end of pre-16S rRNA. The chain is Putative pre-16S rRNA nuclease from Bradyrhizobium sp. (strain BTAi1 / ATCC BAA-1182).